The following is a 106-amino-acid chain: Iron-sulfur cluster assembly protein CyaY (106 aa).

The protein belongs to the frataxin family.

Its function is as follows. Involved in iron-sulfur (Fe-S) cluster assembly. May act as a regulator of Fe-S biogenesis. This Escherichia coli O9:H4 (strain HS) protein is Iron-sulfur cluster assembly protein CyaY.